A 131-amino-acid chain; its full sequence is Urease subunit beta (131 aa).

The disordered stretch occupies residues 100 to 131 (PLDPAAGVTSDEDAASAVVPRGAETSEREARA).

The protein belongs to the urease beta subunit family. In terms of assembly, heterotrimer of UreA (gamma), UreB (beta) and UreC (alpha) subunits. Three heterotrimers associate to form the active enzyme.

It localises to the cytoplasm. It carries out the reaction urea + 2 H2O + H(+) = hydrogencarbonate + 2 NH4(+). Its pathway is nitrogen metabolism; urea degradation; CO(2) and NH(3) from urea (urease route): step 1/1. This Kocuria rhizophila (strain ATCC 9341 / DSM 348 / NBRC 103217 / DC2201) protein is Urease subunit beta.